Reading from the N-terminus, the 319-residue chain is ATP-dependent 6-phosphofructokinase (319 aa).

ATP is bound at residue G11. ADP is bound at residue 21 to 25 (RAVTR). ATP-binding positions include 72 to 73 (RY) and 102 to 105 (GDGS). D103 provides a ligand contact to Mg(2+). A substrate-binding site is contributed by 125 to 127 (TID). D127 functions as the Proton acceptor in the catalytic mechanism. Residue R154 participates in ADP binding. Substrate is bound by residues R162 and 169–171 (MGR). ADP-binding positions include 185–187 (GAD) and 213–215 (KDH). Substrate is bound by residues E222, R243, and 249 to 252 (HMQR).

It belongs to the phosphofructokinase type A (PFKA) family. ATP-dependent PFK group I subfamily. Prokaryotic clade 'B1' sub-subfamily. Homotetramer. Requires Mg(2+) as cofactor.

The protein localises to the cytoplasm. It catalyses the reaction beta-D-fructose 6-phosphate + ATP = beta-D-fructose 1,6-bisphosphate + ADP + H(+). It participates in carbohydrate degradation; glycolysis; D-glyceraldehyde 3-phosphate and glycerone phosphate from D-glucose: step 3/4. Allosterically activated by ADP and other diphosphonucleosides, and allosterically inhibited by phosphoenolpyruvate. The binding affinities for these effectors are decreased however, and therefore the allosteric effect becomes apparent only at high effector concentrations. Functionally, catalyzes the phosphorylation of D-fructose 6-phosphate to fructose 1,6-bisphosphate by ATP, the first committing step of glycolysis. This is ATP-dependent 6-phosphofructokinase from Lactobacillus delbrueckii subsp. bulgaricus.